Here is a 469-residue protein sequence, read N- to C-terminus: Adenosylhomocysteinase (469 aa).

Substrate contacts are provided by Thr63, Asp139, and Glu164. NAD(+) is bound at residue Thr165–Thr167. Substrate is bound by residues Lys194 and Asp198. Residues Asn199, Gly228–Gly233, Glu251, Asn300, Ile321–His323, and Asn375 contribute to the NAD(+) site.

It belongs to the adenosylhomocysteinase family. NAD(+) is required as a cofactor.

It is found in the cytoplasm. It catalyses the reaction S-adenosyl-L-homocysteine + H2O = L-homocysteine + adenosine. The protein operates within amino-acid biosynthesis; L-homocysteine biosynthesis; L-homocysteine from S-adenosyl-L-homocysteine: step 1/1. In terms of biological role, may play a key role in the regulation of the intracellular concentration of adenosylhomocysteine. The sequence is that of Adenosylhomocysteinase from Pseudomonas syringae pv. tomato (strain ATCC BAA-871 / DC3000).